The primary structure comprises 241 residues: Ribose-5-phosphate isomerase A (241 aa).

Substrate-binding positions include 29–32 (TGTT), 84–87 (DGAD), and 97–100 (KGGG). Glutamate 106 serves as the catalytic Proton acceptor. Position 124 (lysine 124) interacts with substrate.

This sequence belongs to the ribose 5-phosphate isomerase family. In terms of assembly, homodimer.

The catalysed reaction is aldehydo-D-ribose 5-phosphate = D-ribulose 5-phosphate. Its pathway is carbohydrate degradation; pentose phosphate pathway; D-ribose 5-phosphate from D-ribulose 5-phosphate (non-oxidative stage): step 1/1. Functionally, catalyzes the reversible conversion of ribose-5-phosphate to ribulose 5-phosphate. The chain is Ribose-5-phosphate isomerase A from Thermoplasma volcanium (strain ATCC 51530 / DSM 4299 / JCM 9571 / NBRC 15438 / GSS1).